Reading from the N-terminus, the 168-residue chain is Large ribosomal subunit protein uL10 (168 aa).

This sequence belongs to the universal ribosomal protein uL10 family. Part of the ribosomal stalk of the 50S ribosomal subunit. The N-terminus interacts with L11 and the large rRNA to form the base of the stalk. The C-terminus forms an elongated spine to which L12 dimers bind in a sequential fashion forming a multimeric L10(L12)X complex.

Forms part of the ribosomal stalk, playing a central role in the interaction of the ribosome with GTP-bound translation factors. The sequence is that of Large ribosomal subunit protein uL10 (rplJ) from Buchnera aphidicola subsp. Baizongia pistaciae (strain Bp).